Consider the following 244-residue polypeptide: Phosphoribosylaminoimidazole-succinocarboxamide synthase (244 aa).

Belongs to the SAICAR synthetase family.

It carries out the reaction 5-amino-1-(5-phospho-D-ribosyl)imidazole-4-carboxylate + L-aspartate + ATP = (2S)-2-[5-amino-1-(5-phospho-beta-D-ribosyl)imidazole-4-carboxamido]succinate + ADP + phosphate + 2 H(+). It participates in purine metabolism; IMP biosynthesis via de novo pathway; 5-amino-1-(5-phospho-D-ribosyl)imidazole-4-carboxamide from 5-amino-1-(5-phospho-D-ribosyl)imidazole-4-carboxylate: step 1/2. This chain is Phosphoribosylaminoimidazole-succinocarboxamide synthase, found in Prochlorococcus marinus (strain SARG / CCMP1375 / SS120).